A 300-amino-acid chain; its full sequence is tRNA dimethylallyltransferase (300 aa).

Position 9–16 (9–16 (GPTASGKS)) interacts with ATP. 11–16 (TASGKS) serves as a coordination point for substrate. An interaction with substrate tRNA region spans residues 34-37 (DSKQ).

The protein belongs to the IPP transferase family. Monomer. It depends on Mg(2+) as a cofactor.

It catalyses the reaction adenosine(37) in tRNA + dimethylallyl diphosphate = N(6)-dimethylallyladenosine(37) in tRNA + diphosphate. In terms of biological role, catalyzes the transfer of a dimethylallyl group onto the adenine at position 37 in tRNAs that read codons beginning with uridine, leading to the formation of N6-(dimethylallyl)adenosine (i(6)A). The chain is tRNA dimethylallyltransferase from Ehrlichia canis (strain Jake).